The chain runs to 734 residues: Photosystem I P700 chlorophyll a apoprotein A2 (734 aa).

Helical transmembrane passes span 46–69, 135–158, 175–199, 273–291, 330–353, 369–395, 417–439, and 517–535; these read IFAS…FHVA, LYQG…LHLQ, LNHH…HVAI, IAHH…GHMY, LHFQ…QHMY, AALY…IFLI, AIIS…LYVH, and FLVH…LILV. Positions 559 and 568 each coordinate [4Fe-4S] cluster. Helical transmembrane passes span 575–596 and 643–665; these read AFYL…YWHW and LSVW…MFLI. Residues His654, Met662, and Tyr670 each coordinate chlorophyll a. A phylloquinone-binding site is contributed by Trp671. A helical transmembrane segment spans residues 707 to 727; sequence VVGLAHFTVGYFLTYAAFLIA.

This sequence belongs to the PsaA/PsaB family. The PsaA/B heterodimer binds the P700 chlorophyll special pair and subsequent electron acceptors. PSI consists of a core antenna complex that captures photons, and an electron transfer chain that converts photonic excitation into a charge separation. The cyanobacterial PSI reaction center is composed of one copy each of PsaA,B,C,D,E,F,I,J,K,L,M and X, and forms trimeric complexes. PSI electron transfer chain: 5 chlorophyll a, 1 chlorophyll a', 2 phylloquinones and 3 4Fe-4S clusters. PSI core antenna: 90 chlorophyll a, 22 carotenoids, 3 phospholipids and 1 galactolipid. P700 is a chlorophyll a/chlorophyll a' dimer, A0 is one or more chlorophyll a, A1 is one or both phylloquinones and FX is a shared 4Fe-4S iron-sulfur center. is required as a cofactor.

The protein resides in the cellular thylakoid membrane. It carries out the reaction reduced [plastocyanin] + hnu + oxidized [2Fe-2S]-[ferredoxin] = oxidized [plastocyanin] + reduced [2Fe-2S]-[ferredoxin]. In terms of biological role, psaA and PsaB bind P700, the primary electron donor of photosystem I (PSI), as well as the electron acceptors A0, A1 and FX. PSI is a plastocyanin/cytochrome c6-ferredoxin oxidoreductase, converting photonic excitation into a charge separation, which transfers an electron from the donor P700 chlorophyll pair to the spectroscopically characterized acceptors A0, A1, FX, FA and FB in turn. Oxidized P700 is reduced on the lumenal side of the thylakoid membrane by plastocyanin or cytochrome c6. The polypeptide is Photosystem I P700 chlorophyll a apoprotein A2 (Synechococcus elongatus (strain ATCC 33912 / PCC 7942 / FACHB-805) (Anacystis nidulans R2)).